We begin with the raw amino-acid sequence, 429 residues long: Ribosomal RNA small subunit methyltransferase B (429 aa).

Residues 254–260 (CAAPGGK), aspartate 277, aspartate 303, and aspartate 322 each bind S-adenosyl-L-methionine. The active-site Nucleophile is the cysteine 375.

Belongs to the class I-like SAM-binding methyltransferase superfamily. RsmB/NOP family.

It localises to the cytoplasm. It catalyses the reaction cytidine(967) in 16S rRNA + S-adenosyl-L-methionine = 5-methylcytidine(967) in 16S rRNA + S-adenosyl-L-homocysteine + H(+). Specifically methylates the cytosine at position 967 (m5C967) of 16S rRNA. In Escherichia coli (strain SMS-3-5 / SECEC), this protein is Ribosomal RNA small subunit methyltransferase B.